Here is a 178-residue protein sequence, read N- to C-terminus: uncharacterized protein (178 aa).

4 helical membrane-spanning segments follow: residues 3-23 (IPIILTLMLFSLGFIFGFISI), 56-76 (IFLMLAGSITFGLSTFINLIF), 101-121 (LILPHGIFEISAMLISAVAGF), and 150-170 (LSLISIILIVIAAFIEVYITP).

The protein to M.jannaschii MJ0706 and Synechocystis PCC 6803 slr1478.

The protein localises to the cell membrane. This is an uncharacterized protein from Methanocaldococcus jannaschii (strain ATCC 43067 / DSM 2661 / JAL-1 / JCM 10045 / NBRC 100440) (Methanococcus jannaschii).